The primary structure comprises 180 residues: 5'(3')-deoxyribonucleotidase (180 aa).

Catalysis depends on Asp9, which acts as the Nucleophile. Mg(2+) contacts are provided by Asp9, Asp11, and Asp134. Catalysis depends on Asp11, which acts as the Proton donor.

The protein belongs to the 5'(3')-deoxyribonucleotidase family. It depends on Mg(2+) as a cofactor.

Functionally, dephosphorylates nucleoside monophosphates such as the 5' and 2'(3')-phosphates of deoxyribonucleotides in vitro. In Clostridium acetobutylicum (strain ATCC 824 / DSM 792 / JCM 1419 / IAM 19013 / LMG 5710 / NBRC 13948 / NRRL B-527 / VKM B-1787 / 2291 / W), this protein is 5'(3')-deoxyribonucleotidase.